The following is a 180-amino-acid chain: UPF0227 protein KPN78578_10770 (180 aa).

This sequence belongs to the UPF0227 family.

In Klebsiella pneumoniae subsp. pneumoniae (strain ATCC 700721 / MGH 78578), this protein is UPF0227 protein KPN78578_10770.